The primary structure comprises 158 residues: Single-stranded DNA-binding protein 2 (158 aa).

One can recognise an SSB domain in the interval 1 to 107; sequence MNETIVCVVG…IDALAVGHDL (107 aa). The segment at 109 to 158 is disordered; that stretch reads RGTSAFRRPSAKDGEAGVSPAARPEPNWETEPGSQPSVEHQPQPEPAGVT.

As to quaternary structure, homotetramer.

This Streptomyces avermitilis (strain ATCC 31267 / DSM 46492 / JCM 5070 / NBRC 14893 / NCIMB 12804 / NRRL 8165 / MA-4680) protein is Single-stranded DNA-binding protein 2 (ssb2).